The primary structure comprises 209 residues: NAD(P)H-quinone oxidoreductase subunit K 2 (209 aa).

Cysteine 53, cysteine 54, cysteine 118, and cysteine 149 together coordinate [4Fe-4S] cluster.

The protein belongs to the complex I 20 kDa subunit family. NDH-1 can be composed of about 15 different subunits; different subcomplexes with different compositions have been identified which probably have different functions. The cofactor is [4Fe-4S] cluster.

Its subcellular location is the cellular thylakoid membrane. It carries out the reaction a plastoquinone + NADH + (n+1) H(+)(in) = a plastoquinol + NAD(+) + n H(+)(out). The catalysed reaction is a plastoquinone + NADPH + (n+1) H(+)(in) = a plastoquinol + NADP(+) + n H(+)(out). Its function is as follows. NDH-1 shuttles electrons from an unknown electron donor, via FMN and iron-sulfur (Fe-S) centers, to quinones in the respiratory and/or the photosynthetic chain. The immediate electron acceptor for the enzyme in this species is believed to be plastoquinone. Couples the redox reaction to proton translocation, and thus conserves the redox energy in a proton gradient. Cyanobacterial NDH-1 also plays a role in inorganic carbon-concentration. The chain is NAD(P)H-quinone oxidoreductase subunit K 2 from Acaryochloris marina (strain MBIC 11017).